Here is a 282-residue protein sequence, read N- to C-terminus: Pyridoxal 5'-phosphate synthase subunit PdxS (282 aa).

Asp-14 contributes to the D-ribose 5-phosphate binding site. Lys-71 serves as the catalytic Schiff-base intermediate with D-ribose 5-phosphate. Position 143 (Gly-143) interacts with D-ribose 5-phosphate. Residue Arg-155 participates in D-glyceraldehyde 3-phosphate binding. D-ribose 5-phosphate is bound by residues Gly-204 and 225 to 226 (GS).

This sequence belongs to the PdxS/SNZ family. As to quaternary structure, in the presence of PdxT, forms a dodecamer of heterodimers.

The enzyme catalyses aldehydo-D-ribose 5-phosphate + D-glyceraldehyde 3-phosphate + L-glutamine = pyridoxal 5'-phosphate + L-glutamate + phosphate + 3 H2O + H(+). It participates in cofactor biosynthesis; pyridoxal 5'-phosphate biosynthesis. Functionally, catalyzes the formation of pyridoxal 5'-phosphate from ribose 5-phosphate (RBP), glyceraldehyde 3-phosphate (G3P) and ammonia. The ammonia is provided by the PdxT subunit. Can also use ribulose 5-phosphate and dihydroxyacetone phosphate as substrates, resulting from enzyme-catalyzed isomerization of RBP and G3P, respectively. This Treponema denticola (strain ATCC 35405 / DSM 14222 / CIP 103919 / JCM 8153 / KCTC 15104) protein is Pyridoxal 5'-phosphate synthase subunit PdxS.